Consider the following 268-residue polypeptide: Sterol uptake protein 2 (268 aa).

It belongs to the SUT1 family.

It is found in the nucleus. Its function is as follows. Putative transcription factor involved in the regulation of the activity of the cAMP/protein kinase A pathway. Involved in sterol uptake. With SUT1, positively regulates mating by repressing the expression of the mating inhibitors NCE102, PRR2 and RHO5 in response to pheromone. This Saccharomyces cerevisiae (strain ATCC 204508 / S288c) (Baker's yeast) protein is Sterol uptake protein 2.